The following is an 83-amino-acid chain: uncharacterized protein (83 aa).

This is an uncharacterized protein from Escherichia coli (Bacteriophage T4).